Consider the following 356-residue polypeptide: Probable methyltransferase-like protein 15 homolog (356 aa).

Residues 55–57, Asp74, Phe103, Asp126, and Gln133 contribute to the S-adenosyl-L-methionine site; that span reads GGH.

This sequence belongs to the methyltransferase superfamily. RsmH family.

Probable S-adenosyl-L-methionine-dependent methyltransferase. The protein is Probable methyltransferase-like protein 15 homolog of Drosophila melanogaster (Fruit fly).